We begin with the raw amino-acid sequence, 396 residues long: L-lactate dehydrogenase (396 aa).

The region spanning 1–380 (MIISAASDYR…TQDSLVQGLG (380 aa)) is the FMN hydroxy acid dehydrogenase domain. Y24 serves as a coordination point for substrate. The FMN site is built by S106 and Q127. Residue Y129 coordinates substrate. T155 provides a ligand contact to FMN. R164 serves as a coordination point for substrate. An FMN-binding site is contributed by K251. H275 functions as the Proton acceptor in the catalytic mechanism. Substrate is bound at residue R278. An FMN-binding site is contributed by 306-330 (DSGIRNGLDVVRMIALGADTVLLGR).

This sequence belongs to the FMN-dependent alpha-hydroxy acid dehydrogenase family. FMN serves as cofactor.

It is found in the cell inner membrane. The catalysed reaction is (S)-lactate + A = pyruvate + AH2. In terms of biological role, catalyzes the conversion of L-lactate to pyruvate. Is coupled to the respiratory chain. The chain is L-lactate dehydrogenase from Shigella boydii serotype 18 (strain CDC 3083-94 / BS512).